We begin with the raw amino-acid sequence, 358 residues long: Methionine aminopeptidase 2 (358 aa).

Position 111 (His111) interacts with substrate. A divalent metal cation is bound by residues Asp131, Asp142, and His211. His219 is a substrate binding site. A divalent metal cation-binding residues include Glu244 and Glu339.

The protein belongs to the peptidase M24A family. Methionine aminopeptidase eukaryotic type 2 subfamily. Co(2+) is required as a cofactor. It depends on Zn(2+) as a cofactor. Requires Mn(2+) as cofactor. The cofactor is Fe(2+).

The protein localises to the cytoplasm. It catalyses the reaction Release of N-terminal amino acids, preferentially methionine, from peptides and arylamides.. Cotranslationally removes the N-terminal methionine from nascent proteins. The N-terminal methionine is often cleaved when the second residue in the primary sequence is small and uncharged (Met-Ala-, Cys, Gly, Pro, Ser, Thr, or Val). The sequence is that of Methionine aminopeptidase 2 from Laccaria bicolor (strain S238N-H82 / ATCC MYA-4686) (Bicoloured deceiver).